Reading from the N-terminus, the 147-residue chain is Protein archease (147 aa).

Ca(2+) contacts are provided by Asp-17, Asp-146, and Ile-147.

This sequence belongs to the archease family.

Activates the tRNA-splicing ligase complex by facilitating the enzymatic turnover of catalytic subunit RtcB. Acts by promoting the guanylylation of RtcB, a key intermediate step in tRNA ligation. Can also alter the NTP specificity of RtcB such that ATP, dGTP or ITP is used efficiently. The polypeptide is Protein archease (Pyrobaculum calidifontis (strain DSM 21063 / JCM 11548 / VA1)).